The sequence spans 121 residues: Small ribosomal subunit protein uS13 (121 aa).

The segment at Arg-89–Lys-121 is disordered. Residues Gln-100 to Lys-121 show a composition bias toward basic residues.

Belongs to the universal ribosomal protein uS13 family. In terms of assembly, part of the 30S ribosomal subunit. Forms a loose heterodimer with protein S19. Forms two bridges to the 50S subunit in the 70S ribosome.

Its function is as follows. Located at the top of the head of the 30S subunit, it contacts several helices of the 16S rRNA. In the 70S ribosome it contacts the 23S rRNA (bridge B1a) and protein L5 of the 50S subunit (bridge B1b), connecting the 2 subunits; these bridges are implicated in subunit movement. Contacts the tRNAs in the A and P-sites. This chain is Small ribosomal subunit protein uS13, found in Prochlorococcus marinus subsp. pastoris (strain CCMP1986 / NIES-2087 / MED4).